A 249-amino-acid chain; its full sequence is Small ribosomal subunit protein uS4m (249 aa).

Positions 133-193 constitute an S4 RNA-binding domain; sequence RRLDIIIYRA…PEIVNLLRNQ (61 aa).

The protein belongs to the universal ribosomal protein uS4 family.

It localises to the mitochondrion. The sequence is that of Small ribosomal subunit protein uS4m (RPS4) from Reclinomonas americana.